The chain runs to 497 residues: MAKPKKTPRPKAQTPKGFRDYFGTEVTERKAMLDKIAEVYHLYGFDPLETSAVETVEALGKFLPDVDRPNEGVFAWQEDDADWLALRYDLTAPLARVAAQYRNDLPSPYRRYAMGPVWRNEKPGPGRFRQFYQCDADTVGAPSVAADAEVCAMLATALEAVGIARGDYIVRVNNRKVLNGVFESAGLLDSEYLADNLKRVGIAIRAVDKFDRLGSDGVKALLGKGREDESGAFVEGANLAEWQIDRILGFATAKQSTELETLDRLTELVGNSDEGLQGVEELKHISDLLSAQGFGPDRIVIDPSVVRGLGYYTGPVFEAELTFEVQNDKGQTVQFGSVAGGGRYDDLVKRFTGQAVPATGVSIGVDRLLAALRAKGQAQTAAPGPVIVTVMDRDRIADYQAMVGTLRDAGIRAELYLGNPKNFGNQLKYADKRAAPVAVIQGSDEAARGVVQIKDLVLGAQIAESASLDEWKSQPAQREVPVADLVAEVQAILARGA.

This sequence belongs to the class-II aminoacyl-tRNA synthetase family. Homodimer.

It is found in the cytoplasm. It carries out the reaction tRNA(His) + L-histidine + ATP = L-histidyl-tRNA(His) + AMP + diphosphate + H(+). The chain is Histidine--tRNA ligase from Dinoroseobacter shibae (strain DSM 16493 / NCIMB 14021 / DFL 12).